The chain runs to 322 residues: MYTLEEIKNQLGLKSEKKSIVFPEAESEIIQSVAKTLVDEKLGLPILLFKSSKEVPSEIKNNSSIKTICLDEFDTKEFEEEFVKLRKGKATIEVAHQVMQLPNYIGAMLVKLNQADCMLSGLNNTTADTIRPALQIIGTKPGYNIASSIFVMSKGNENYIFTDCALNIKPTSEQLVEITQMAVDFAKALNVKNVEAALLSYSTNGSGKGEDVDRVHQAVEILKSKEKDYVCEGEIQFDAAFDKKTRDKKFKNCSLLKQTPDIFVFPDINAGNIGYKIAQRMGGFEAIGPFVLGLNQPVNDLSRGATFVDVLNTAIMTLYLSY.

It belongs to the phosphate acetyltransferase and butyryltransferase family.

The protein resides in the cytoplasm. The enzyme catalyses acetyl-CoA + phosphate = acetyl phosphate + CoA. Its pathway is metabolic intermediate biosynthesis; acetyl-CoA biosynthesis; acetyl-CoA from acetate: step 2/2. In Mycoplasma capricolum subsp. capricolum (strain California kid / ATCC 27343 / NCTC 10154), this protein is Phosphate acetyltransferase (pta).